The primary structure comprises 409 residues: Sulfide-quinone reductase (409 aa).

FAD-binding positions include 8-12 (GGRFG), 34-35 (NK), and cysteine 129. Catalysis depends on cysteine 178, which acts as the Cysteine persulfide intermediate. Residues asparagine 271, aspartate 307, and glycine 317 each contribute to the FAD site. The Cysteine persulfide intermediate role is filled by cysteine 350.

Belongs to the SQRD family. In terms of assembly, monomer. The cofactor is FAD.

The protein localises to the membrane. It catalyses the reaction n a quinone + n hydrogen sulfide + n H(+) = polysulfur(n-2) + n a quinol. Its activity is regulated as follows. Inhibited by the quinone analog 2-heptyl-4-hydroxyquinolone N-oxide (HQNO). Inactivated by iodoacetamide treatment. Inhibited by KCN. In terms of biological role, catalyzes the oxidation of sulfides, such as hydrogen sulfide, with the help of a quinone. Has the highest activity with caldariella quinone and decylubiquinone, and lower activity with naphtoquinones. Consecutive reaction cycles lead to the accumulation of a polysulfide product on the active site Cys residues; these products are released when they exceed a critical length, typically as cyclooctasulfur. This chain is Sulfide-quinone reductase, found in Acidianus ambivalens (Desulfurolobus ambivalens).